A 261-amino-acid polypeptide reads, in one-letter code: Ribosomal RNA small subunit methyltransferase A (261 aa).

S-adenosyl-L-methionine is bound by residues Asn-20, Leu-22, Gly-47, Glu-68, Asp-90, and Asn-110.

Belongs to the class I-like SAM-binding methyltransferase superfamily. rRNA adenine N(6)-methyltransferase family. RsmA subfamily.

It is found in the cytoplasm. The enzyme catalyses adenosine(1518)/adenosine(1519) in 16S rRNA + 4 S-adenosyl-L-methionine = N(6)-dimethyladenosine(1518)/N(6)-dimethyladenosine(1519) in 16S rRNA + 4 S-adenosyl-L-homocysteine + 4 H(+). Functionally, specifically dimethylates two adjacent adenosines (A1518 and A1519) in the loop of a conserved hairpin near the 3'-end of 16S rRNA in the 30S particle. May play a critical role in biogenesis of 30S subunits. The polypeptide is Ribosomal RNA small subunit methyltransferase A (Prosthecochloris aestuarii (strain DSM 271 / SK 413)).